The chain runs to 257 residues: Imidazole glycerol phosphate synthase subunit HisF (257 aa).

Residues D12 and D131 contribute to the active site.

It belongs to the HisA/HisF family. In terms of assembly, heterodimer of HisH and HisF.

The protein localises to the cytoplasm. The enzyme catalyses 5-[(5-phospho-1-deoxy-D-ribulos-1-ylimino)methylamino]-1-(5-phospho-beta-D-ribosyl)imidazole-4-carboxamide + L-glutamine = D-erythro-1-(imidazol-4-yl)glycerol 3-phosphate + 5-amino-1-(5-phospho-beta-D-ribosyl)imidazole-4-carboxamide + L-glutamate + H(+). Its pathway is amino-acid biosynthesis; L-histidine biosynthesis; L-histidine from 5-phospho-alpha-D-ribose 1-diphosphate: step 5/9. Its function is as follows. IGPS catalyzes the conversion of PRFAR and glutamine to IGP, AICAR and glutamate. The HisF subunit catalyzes the cyclization activity that produces IGP and AICAR from PRFAR using the ammonia provided by the HisH subunit. This chain is Imidazole glycerol phosphate synthase subunit HisF, found in Mycobacteroides abscessus (strain ATCC 19977 / DSM 44196 / CCUG 20993 / CIP 104536 / JCM 13569 / NCTC 13031 / TMC 1543 / L948) (Mycobacterium abscessus).